A 255-amino-acid chain; its full sequence is Acetylglutamate kinase (255 aa).

Substrate contacts are provided by residues 40–41 (GG), arginine 62, and asparagine 153.

This sequence belongs to the acetylglutamate kinase family. ArgB subfamily.

Its subcellular location is the cytoplasm. The catalysed reaction is N-acetyl-L-glutamate + ATP = N-acetyl-L-glutamyl 5-phosphate + ADP. Its pathway is amino-acid biosynthesis; L-arginine biosynthesis; N(2)-acetyl-L-ornithine from L-glutamate: step 2/4. In terms of biological role, catalyzes the ATP-dependent phosphorylation of N-acetyl-L-glutamate. This chain is Acetylglutamate kinase, found in Bacillus cereus (strain 03BB102).